Reading from the N-terminus, the 254-residue chain is Protein PET122, mitochondrial (254 aa).

The N-terminal 8 residues, 1–8 (MLTITKRL), are a transit peptide targeting the mitochondrion. The essential for PET122 function stretch occupies residues 185–254 (QAAALALFGR…IKRRGFEINT (70 aa)).

The protein resides in the mitochondrion inner membrane. In terms of biological role, required for expression of the mitochondrial gene for cytochrome c oxidase subunit 3 (COX3). PET122 seems to work by directly interacting with the small ribosomal subunit to promote translation initiation on the COX3 mRNA. This chain is Protein PET122, mitochondrial (PET122), found in Saccharomyces cerevisiae (strain ATCC 204508 / S288c) (Baker's yeast).